The following is a 359-amino-acid chain: Endosome-associated-trafficking regulator 1 (359 aa).

2 positions are modified to phosphoserine: serine 18 and serine 74. Positions 100-125 (LLDEDEDEEDGWNGAYLPSAMEQTHS) are required for interaction with PTPN13. Positions 153–180 (SLPPWTLSDSDSRISPTGSPSADFTAHG) are disordered. Residues 159–174 (LSDSDSRISPTGSPSA) show a composition bias toward polar residues. Residues serine 167 and serine 171 each carry the phosphoserine modification. Residues 185–295 (DRHLRTLQIS…FKRENEALRS (111 aa)) adopt a coiled-coil conformation.

The protein belongs to the ENTR1 family. As to quaternary structure, found in a complex with ENTR1, PTPN13 and GIT1. Interacts with PTPN13 (via the FERM domain). Interacts (via N-terminus) with GIT1 (via N- and C-terminus); this interaction is direct. Interacts with NOD2. Interacts (via N-terminus) with IFT88. Interacts with VPS35. Post-translationally, phosphorylated.

The protein localises to the cytoplasm. It is found in the early endosome. Its subcellular location is the endosome. The protein resides in the recycling endosome. It localises to the midbody. The protein localises to the cytoskeleton. It is found in the microtubule organizing center. Its subcellular location is the centrosome. The protein resides in the cilium basal body. In terms of biological role, endosome-associated protein that plays a role in membrane receptor sorting, cytokinesis and ciliogenesis. Involved in the endosome-to-plasma membrane trafficking and recycling of SNX27-retromer-dependent cargo proteins, such as GLUT1. Involved in the regulation of cytokinesis; the function may involve PTPN13 and GIT1. Plays a role in the formation of cilia. Involved in cargo protein localization, such as PKD2, at primary cilia. Involved in the presentation of the tumor necrosis factor (TNF) receptor TNFRSF1A on the cell surface, and hence in the modulation of the TNF-induced apoptosis. The polypeptide is Endosome-associated-trafficking regulator 1 (Bos taurus (Bovine)).